The following is a 154-amino-acid chain: Acidic phospholipase A2 2 (154 aa).

Residues 1-19 (MHPAHLLVPLGVCVSLLGA) form the signal peptide. Positions 20–27 (ARIPPLPL) are excised as a propeptide. Intrachain disulfides connect cysteine 38–cysteine 104, cysteine 54–cysteine 153, cysteine 56–cysteine 72, cysteine 71–cysteine 132, cysteine 78–cysteine 125, cysteine 88–cysteine 118, and cysteine 111–cysteine 123. Tyrosine 55, glycine 57, and glycine 59 together coordinate Ca(2+). The active site involves histidine 75. Aspartate 76 is a binding site for Ca(2+). Aspartate 126 is an active-site residue.

The protein belongs to the phospholipase A2 family. Group I subfamily. D49 sub-subfamily. In terms of assembly, monomer. It depends on Ca(2+) as a cofactor. In terms of tissue distribution, expressed by the venom gland.

It is found in the secreted. The enzyme catalyses a 1,2-diacyl-sn-glycero-3-phosphocholine + H2O = a 1-acyl-sn-glycero-3-phosphocholine + a fatty acid + H(+). In terms of biological role, snake venom phospholipase A2 (PLA2) that shows moderate enzymatic activity and exhibits procoagulant activity. PLA2 catalyzes the calcium-dependent hydrolysis of the 2-acyl groups in 3-sn-phosphoglycerides. This chain is Acidic phospholipase A2 2, found in Pseudonaja textilis (Eastern brown snake).